A 1209-amino-acid chain; its full sequence is Phospholipid-transporting ATPase ID (1209 aa).

The Cytoplasmic segment spans residues 1–68 (MTVPKEIPEK…NIVTFLPVNL (68 aa)). Positions 12–36 (ARAGAPPSWSQKKPSWGTEEERRAR) are disordered. Residues 69–89 (FEQFQEVANTYFLFLLILQLI) traverse the membrane as a helical segment. Topologically, residues 90–91 (PQ) are exoplasmic loop. Residues 92-112 (ISSLSWFTTIVPLVLVLTITA) form a helical membrane-spanning segment. Residues 113–295 (VKDATDDYFR…TSIDRLMNTL (183 aa)) lie on the Cytoplasmic side of the membrane. A helical transmembrane segment spans residues 296–316 (VLWIFGFLVCMGVILAIGNAI). Topologically, residues 317–338 (WEHEVGTRFQVYLPWDEAVDSA) are exoplasmic loop. The helical transmembrane segment at 339–359 (FFSGFLSFWSYIIILNTVVPI) threads the bilayer. Residues 360–898 (SLYVSVEVIR…KFLCYFFYKN (539 aa)) lie on the Cytoplasmic side of the membrane. D411 serves as the catalytic 4-aspartylphosphate intermediate. The ATP site is built by D411, K412, T413, E515, F556, K579, R613, T693, G694, D695, R807, and K813. D411 is a Mg(2+) binding site. T413 serves as a coordination point for Mg(2+). D833 contacts Mg(2+). N836 and D837 together coordinate ATP. Position 837 (D837) interacts with Mg(2+). A helical membrane pass occupies residues 899–919 (FAFTMVHFWFGFFCGFSAQTV). The Exoplasmic loop portion of the chain corresponds to 920–922 (YDQ). The helical transmembrane segment at 923–943 (YFITLYNIVYTSLPVLAMGVF) threads the bilayer. Residues 944-972 (DQDVPEQRSMEYPKLYEPGQLNLLFNKRE) lie on the Cytoplasmic side of the membrane. Residues 973 to 993 (FFICIAQGIYTSVLMFFIPYG) form a helical membrane-spanning segment. Residues 994–1011 (VFAEATRDDGTQLADYQS) are Exoplasmic loop-facing. Residues 1012–1032 (FAVTVATSLVIVVSVQIGLDT) form a helical membrane-spanning segment. Over 1033-1036 (GYWT) the chain is Cytoplasmic. The chain crosses the membrane as a helical span at residues 1037–1057 (AINHFFIWGSLAVYFAILFAM). Residues 1058–1082 (HSNGLFDMFPNQFRFVGNAQNTLAQ) lie on the Exoplasmic loop side of the membrane. The chain crosses the membrane as a helical span at residues 1083–1103 (PTVWLTIALTTAVCIMPVVAF). At 1104-1209 (RFLRLSLKPD…SGGAEKPLKG (106 aa)) the chain is on the cytoplasmic side. Phosphoserine is present on S1175. The segment at 1179–1209 (RSSSSWIESLRRKKSDSANSPSGGAEKPLKG) is disordered.

Belongs to the cation transport ATPase (P-type) (TC 3.A.3) family. Type IV subfamily. Component of a P4-ATPase flippase complex which consists of a catalytic alpha subunit ATP8B2 and an accessory beta subunit TMEM30A or TMEM30B. The cofactor is Mg(2+). As to expression, expressed in brain and testes (at protein level).

The protein resides in the cell membrane. It localises to the endoplasmic reticulum membrane. It carries out the reaction ATP + H2O + phospholipidSide 1 = ADP + phosphate + phospholipidSide 2.. The enzyme catalyses a 1,2-diacyl-sn-glycero-3-phosphocholine(out) + ATP + H2O = a 1,2-diacyl-sn-glycero-3-phosphocholine(in) + ADP + phosphate + H(+). In terms of biological role, catalytic component of P4-ATPase flippase complex, which catalyzes the hydrolysis of ATP coupled to the transport of phosphatidylcholine (PC) from the outer to the inner leaflet of the plasma membrane. May contribute to the maintenance of membrane lipid asymmetry. This chain is Phospholipid-transporting ATPase ID, found in Mus musculus (Mouse).